The primary structure comprises 276 residues: Formamidopyrimidine-DNA glycosylase (276 aa).

Pro-2 (schiff-base intermediate with DNA) is an active-site residue. Residue Glu-3 is the Proton donor of the active site. The Proton donor; for beta-elimination activity role is filled by Lys-59. Residues His-92, Arg-111, and Lys-155 each coordinate DNA. An FPG-type zinc finger spans residues 239 to 273 (AVYGQTGAPCPRCGTAIEKIKVGGRGTHFCPTCQQ). The active-site Proton donor; for delta-elimination activity is Arg-263.

Belongs to the FPG family. As to quaternary structure, monomer. It depends on Zn(2+) as a cofactor.

The enzyme catalyses Hydrolysis of DNA containing ring-opened 7-methylguanine residues, releasing 2,6-diamino-4-hydroxy-5-(N-methyl)formamidopyrimidine.. It carries out the reaction 2'-deoxyribonucleotide-(2'-deoxyribose 5'-phosphate)-2'-deoxyribonucleotide-DNA = a 3'-end 2'-deoxyribonucleotide-(2,3-dehydro-2,3-deoxyribose 5'-phosphate)-DNA + a 5'-end 5'-phospho-2'-deoxyribonucleoside-DNA + H(+). In terms of biological role, involved in base excision repair of DNA damaged by oxidation or by mutagenic agents. Acts as a DNA glycosylase that recognizes and removes damaged bases. Has a preference for oxidized purines, such as 7,8-dihydro-8-oxoguanine (8-oxoG). Has AP (apurinic/apyrimidinic) lyase activity and introduces nicks in the DNA strand. Cleaves the DNA backbone by beta-delta elimination to generate a single-strand break at the site of the removed base with both 3'- and 5'-phosphates. In Exiguobacterium sibiricum (strain DSM 17290 / CCUG 55495 / CIP 109462 / JCM 13490 / 255-15), this protein is Formamidopyrimidine-DNA glycosylase.